Consider the following 236-residue polypeptide: Purine nucleoside phosphorylase DeoD-type 2 (236 aa).

Residue His5 coordinates a purine D-ribonucleoside. Phosphate-binding positions include Gly21, Arg25, Arg44, and 88 to 91 (RVGS). A purine D-ribonucleoside is bound by residues 180–182 (DME) and 204–205 (SD). Asp205 functions as the Proton donor in the catalytic mechanism.

Belongs to the PNP/UDP phosphorylase family. Homohexamer; trimer of homodimers.

It catalyses the reaction a purine D-ribonucleoside + phosphate = a purine nucleobase + alpha-D-ribose 1-phosphate. It carries out the reaction a purine 2'-deoxy-D-ribonucleoside + phosphate = a purine nucleobase + 2-deoxy-alpha-D-ribose 1-phosphate. Catalyzes the reversible phosphorolytic breakdown of the N-glycosidic bond in the beta-(deoxy)ribonucleoside molecules, with the formation of the corresponding free purine bases and pentose-1-phosphate. This chain is Purine nucleoside phosphorylase DeoD-type 2, found in Vibrio parahaemolyticus serotype O3:K6 (strain RIMD 2210633).